The sequence spans 417 residues: MSKITKIKGFADLFPPESDVFTRMESVARQVFGRYGFVELRTPILERTDLFCRSIGTETDVVQKEMYTFPDRKDRSLTMRPEATAGVMRAYIESGRHTQEPVSKLFTSGPMFRYERPQKGRMRQFHQINCEVLGPVEPHADAELVLMLMRFLTELGLTGLSLQINSLGCKECRPLYRKALSDFLASIDNAALCEDCRRRMETNPLRVLDCKVPGCRELTANAPTILEHNCPECRTHFDAVLRILDSRNVPYVLNDRLVRGLDYYNRTTFEVVSDSIGSQGSVAGGGRYDGLISQLGGPDVPGVGFACGMERLALMMPGAEAPRPHFHVAVLDPAAQDAALLLAEDLRAQGLAGSVGFGAGSIKSRMRLAGKSGARACLILGGDELAAGTVVVKDMDSGEQETIGRDAVAARLLAAGA.

The protein belongs to the class-II aminoacyl-tRNA synthetase family. Homodimer.

It is found in the cytoplasm. It catalyses the reaction tRNA(His) + L-histidine + ATP = L-histidyl-tRNA(His) + AMP + diphosphate + H(+). This is Histidine--tRNA ligase from Nitratidesulfovibrio vulgaris (strain DP4) (Desulfovibrio vulgaris).